Here is a 248-residue protein sequence, read N- to C-terminus: Probable transcriptional regulatory protein BRADO1143 (248 aa).

Belongs to the TACO1 family.

The protein resides in the cytoplasm. This Bradyrhizobium sp. (strain ORS 278) protein is Probable transcriptional regulatory protein BRADO1143.